A 483-amino-acid chain; its full sequence is Type 2 glycosyltransferase (483 aa).

A helical membrane pass occupies residues Ala-21–Leu-41. The Dxd motif signature appears at Asp-156–Asp-158. The QxxxRW motif signature appears at Gln-301–Trp-305. A glycan (N-linked (GlcNAc...) asparagine) is linked at Asn-313. The next 3 helical transmembrane spans lie at Ile-336–Trp-356, Ala-369–Phe-389, and Ile-396–Ala-416. Asn-421 is a glycosylation site (N-linked (GlcNAc...) asparagine).

It belongs to the GT2 glycosyltransferase family.

It localises to the cell membrane. Its function is as follows. Glycosyltransferase that plays an important role in infection-related morphogenesis and pathogenesis. Involved in stress tolerance and hyphal hydrophobicity via its regulation of the expression of nydrophobin MPG1. May regulate growth, pathogenicity, and cell wall integrity (CWI) through glycosylation of heat shock protein SSB1, and other (unidentified) substrates may contribute to conidiation. Candidate proteins as potential substrates of GT2 include several heat shock proteins (SSB1/MGG_02503, MGG_06759 and MGG_06958), two coiled-coil domain-containing proteins (MGG_04321 and MGG_09571), aminopeptidase 2 (MGG_16472), and a nuclease domain-containing protein (MGG_12646). The sequence is that of Type 2 glycosyltransferase from Pyricularia oryzae (strain 70-15 / ATCC MYA-4617 / FGSC 8958) (Rice blast fungus).